The following is a 163-amino-acid chain: MASEHSFDISAALDKQELKNAFEQAKKELDSRYDLKGIKCEIDLSEKESIFKLSSSSEGKLDVLKDIVISKLIKRGINPNAIKELSRESGAMFRLNLKANDAIDSENAKKINKAIKDSKLKVNSSIRGEEIRVAAKQIDDLQAVMKLVKELDLELNISFKNLK.

Belongs to the YajQ family.

In terms of biological role, nucleotide-binding protein. The chain is Nucleotide-binding protein C8J_0350 from Campylobacter jejuni subsp. jejuni serotype O:6 (strain 81116 / NCTC 11828).